The sequence spans 671 residues: Autophagy-related protein 22-2 (671 aa).

Composition is skewed to polar residues over residues 1–10 and 19–34; these read MVPRNFSESQ and PSNS…SSSF. The tract at residues 1 to 67 is disordered; it reads MVPRNFSESQ…RDVPAQYAGE (67 aa). N-linked (GlcNAc...) asparagine glycans are attached at residues Asn5 and Asn21. Over residues 39 to 60 the composition is skewed to basic and acidic residues; that stretch reads ERSSSADHDSMGPDIGSAHRDV. A run of 4 helical transmembrane segments spans residues 83 to 103, 155 to 175, 188 to 208, and 212 to 232; these read YGFA…PITL, SFAM…VVSI, LLLF…TVVP, and LLGA…FVLL. A disordered region spans residues 251-271; the sequence is PDFSPEFRPSSVDESPPEHSL. A helical membrane pass occupies residues 324-344; sequence IGIGYSAGLFLQCVSIVIIWL. Asn346 carries an N-linked (GlcNAc...) asparagine glycan. Helical transmembrane passes span 354–374, 422–442, 457–477, 491–511, 523–543, 560–582, and 591–611; these read LVLF…ALWL, FFLA…GTAV, GLIN…WAAI, ACIC…LPIV, WEMY…SSYC, YALY…GAIV, and AFWF…FVNV. A disordered region spans residues 634–671; it reads ESAGEGSRGSSIDHESGQNEGLIYPRVGENAGRGRNDI.

Belongs to the ATG22 family.

The protein localises to the vacuole membrane. Functionally, vacuolar effluxer which mediate the efflux of amino acids resulting from autophagic degradation. The release of autophagic amino acids allows the maintenance of protein synthesis and viability during nitrogen starvation. The protein is Autophagy-related protein 22-2 (atg22-2) of Sclerotinia sclerotiorum (strain ATCC 18683 / 1980 / Ss-1) (White mold).